The chain runs to 342 residues: Arrestin domain-containing protein 5 (342 aa).

The protein belongs to the arrestin family. In terms of tissue distribution, testis-enriched.

It localises to the membrane. Plays an essential role in spermatogenesis. May be involved in the anchoring of the sperm head to the tail during spermatogenesis by affecting SEC22A-mediated SUN5 and NDC1 transport and localization. The sequence is that of Arrestin domain-containing protein 5 (ARRDC5) from Homo sapiens (Human).